The following is a 305-amino-acid chain: Protoheme IX farnesyltransferase (305 aa).

A run of 9 helical transmembrane segments spans residues Val-29–Val-49, Trp-51–Ile-71, Thr-101–Asn-121, Leu-123–Leu-143, Ile-151–Gly-171, Ala-177–Leu-197, Leu-221–Tyr-241, Ser-244–Trp-264, and Ile-283–Pro-303.

The protein belongs to the UbiA prenyltransferase family. Protoheme IX farnesyltransferase subfamily.

It localises to the cell inner membrane. It carries out the reaction heme b + (2E,6E)-farnesyl diphosphate + H2O = Fe(II)-heme o + diphosphate. It functions in the pathway porphyrin-containing compound metabolism; heme O biosynthesis; heme O from protoheme: step 1/1. Its function is as follows. Converts heme B (protoheme IX) to heme O by substitution of the vinyl group on carbon 2 of heme B porphyrin ring with a hydroxyethyl farnesyl side group. The chain is Protoheme IX farnesyltransferase from Cupriavidus metallidurans (strain ATCC 43123 / DSM 2839 / NBRC 102507 / CH34) (Ralstonia metallidurans).